We begin with the raw amino-acid sequence, 941 residues long: Probable respiratory burst oxidase homolog protein I (941 aa).

Residues 1–374 lie on the Cytoplasmic side of the membrane; it reads MSMSFSGGTH…LYSLQDNWKR (374 aa). 2 disordered regions span residues 29-48 and 103-166; these read PSLPATYSPSPSSSSSSGEE and ERLT…SGTE. Low complexity predominate over residues 36–45; sequence SPSPSSSSSS. The span at 103 to 117 shows a compositional bias: polar residues; that stretch reads ERLTAGTNSKQQIQK. 2 EF-hand-like regions span residues 196-204 and 232-243; these read SKDGYLFKS and RRIMVDKINLQE. Residues 254–289 enclose the EF-hand domain; sequence ESFDSRLQIFFNMVKNGDGRITENEVKEIIILSASA. Ca(2+)-binding residues include N269, D271, R273, and E278. A phosphoserine mark is found at S346 and S350. The helical transmembrane segment at 375–395 threads the bilayer; the sequence is IWVLTLWFVIMAWLFMWKCYQ. Residues 396-407 are Extracellular-facing; the sequence is YKHKDAFHVMGY. A helical transmembrane segment spans residues 408–428; sequence CLVMAKGAAETLKFNMALILL. Residues 413–570 enclose the Ferric oxidoreductase domain; it reads KGAAETLKFN…LLLTVYVLLV (158 aa). The Cytoplasmic segment spans residues 429 to 514; the sequence is PVCRNTITYL…YFGLVNTPVG (86 aa). A helical membrane pass occupies residues 515–535; it reads ITGIIMVAFMLIAFTLASRRC. Residues 536–557 lie on the Extracellular side of the membrane; it reads RRNLTKLPKPFDKLTGYNAFWY. Residues 558 to 578 form a helical membrane-spanning segment; that stretch reads SHHLLLTVYVLLVIHGVSLYL. At 579–586 the chain is on the cytoplasmic side; that stretch reads EHKWYRKT. The chain crosses the membrane as a helical span at residues 587–604; the sequence is VWMYLAVPVLLYVGERIF. The Extracellular segment spans residues 605 to 731; the sequence is RFFRSRLYTV…PYGAPAQDHW (127 aa). In terms of domain architecture, FAD-binding FR-type spans 609–729; it reads SRLYTVEICK…DGPYGAPAQD (121 aa). The chain crosses the membrane as a helical span at residues 732–752; the sequence is KYDVVLLVGLGIGATPFVSIL. The Cytoplasmic segment spans residues 753 to 941; the sequence is RDLLNNIIKQ…TRFDFHKEQF (189 aa).

It belongs to the RBOH (TC 5.B.1.3) family. As to quaternary structure, monomer and homodimer.

It localises to the membrane. In terms of biological role, calcium-dependent NADPH oxidase that generates superoxide. In Arabidopsis thaliana (Mouse-ear cress), this protein is Probable respiratory burst oxidase homolog protein I (RBOHI).